Reading from the N-terminus, the 267-residue chain is 4-hydroxy-tetrahydrodipicolinate reductase (267 aa).

Residues 12–17, 100–102, and 126–129 each bind NAD(+); these read GPRGRM, GTT, and APNF. Histidine 156 functions as the Proton donor/acceptor in the catalytic mechanism. Histidine 157 contributes to the (S)-2,3,4,5-tetrahydrodipicolinate binding site. The active-site Proton donor is the lysine 160. Residue 166 to 167 coordinates (S)-2,3,4,5-tetrahydrodipicolinate; the sequence is GT.

Belongs to the DapB family.

It localises to the cytoplasm. The catalysed reaction is (S)-2,3,4,5-tetrahydrodipicolinate + NAD(+) + H2O = (2S,4S)-4-hydroxy-2,3,4,5-tetrahydrodipicolinate + NADH + H(+). It carries out the reaction (S)-2,3,4,5-tetrahydrodipicolinate + NADP(+) + H2O = (2S,4S)-4-hydroxy-2,3,4,5-tetrahydrodipicolinate + NADPH + H(+). The protein operates within amino-acid biosynthesis; L-lysine biosynthesis via DAP pathway; (S)-tetrahydrodipicolinate from L-aspartate: step 4/4. Functionally, catalyzes the conversion of 4-hydroxy-tetrahydrodipicolinate (HTPA) to tetrahydrodipicolinate. In Bacillus subtilis (strain 168), this protein is 4-hydroxy-tetrahydrodipicolinate reductase.